Reading from the N-terminus, the 208-residue chain is FMN-dependent NADH:quinone oxidoreductase 1 (208 aa).

Residues S10, 15–17, and 97–100 each bind FMN; these read SES and MWNF.

The protein belongs to the azoreductase type 1 family. As to quaternary structure, homodimer. The cofactor is FMN.

The catalysed reaction is 2 a quinone + NADH + H(+) = 2 a 1,4-benzosemiquinone + NAD(+). It catalyses the reaction N,N-dimethyl-1,4-phenylenediamine + anthranilate + 2 NAD(+) = 2-(4-dimethylaminophenyl)diazenylbenzoate + 2 NADH + 2 H(+). In terms of biological role, quinone reductase that provides resistance to thiol-specific stress caused by electrophilic quinones. Functionally, also exhibits azoreductase activity. Catalyzes the reductive cleavage of the azo bond in aromatic azo compounds to the corresponding amines. In Bradyrhizobium diazoefficiens (strain JCM 10833 / BCRC 13528 / IAM 13628 / NBRC 14792 / USDA 110), this protein is FMN-dependent NADH:quinone oxidoreductase 1.